Consider the following 637-residue polypeptide: Chaperone protein DnaK (637 aa).

T196 is modified (phosphothreonine; by autocatalysis). Disordered regions lie at residues K484–T528 and T598–K637. Over residues S501–T528 the composition is skewed to basic and acidic residues. The segment covering A600–S620 has biased composition (low complexity). Over residues G621–K637 the composition is skewed to basic and acidic residues.

Belongs to the heat shock protein 70 family.

Functionally, acts as a chaperone. This is Chaperone protein DnaK from Chloroherpeton thalassium (strain ATCC 35110 / GB-78).